Consider the following 228-residue polypeptide: ATP phosphoribosyltransferase (228 aa).

Belongs to the ATP phosphoribosyltransferase family. Short subfamily. In terms of assembly, heteromultimer composed of HisG and HisZ subunits.

It is found in the cytoplasm. It catalyses the reaction 1-(5-phospho-beta-D-ribosyl)-ATP + diphosphate = 5-phospho-alpha-D-ribose 1-diphosphate + ATP. The protein operates within amino-acid biosynthesis; L-histidine biosynthesis; L-histidine from 5-phospho-alpha-D-ribose 1-diphosphate: step 1/9. Functionally, catalyzes the condensation of ATP and 5-phosphoribose 1-diphosphate to form N'-(5'-phosphoribosyl)-ATP (PR-ATP). Has a crucial role in the pathway because the rate of histidine biosynthesis seems to be controlled primarily by regulation of HisG enzymatic activity. This Acinetobacter baylyi (strain ATCC 33305 / BD413 / ADP1) protein is ATP phosphoribosyltransferase.